We begin with the raw amino-acid sequence, 542 residues long: Glucans biosynthesis protein G (542 aa).

The signal sequence occupies residues 1–34 (MVSLLRCPSSKPYSSLICSLTLGAVVALSGVAYA).

Belongs to the OpgD/OpgG family.

It localises to the periplasm. The protein operates within glycan metabolism; osmoregulated periplasmic glucan (OPG) biosynthesis. Its function is as follows. Involved in the biosynthesis of osmoregulated periplasmic glucans (OPGs). The chain is Glucans biosynthesis protein G from Shewanella baltica (strain OS223).